The chain runs to 454 residues: Cathepsin C (454 aa).

Positions 1 to 20 (MHWVFHCILIILACLRFTCA) are cleaved as a signal peptide. Positions 21-217 (DTPANCTYED…SKELISLTGN (197 aa)) are excised as a propeptide. A glycan (N-linked (GlcNAc...) asparagine) is linked at Asn25. Disulfide bonds link Cys26/Cys107, Cys244/Cys287, and Cys280/Cys321. The active site involves Cys247. The N-linked (GlcNAc...) asparagine glycan is linked to Asn265. Residue Phe291 participates in chloride binding. A glycan (N-linked (GlcNAc...) asparagine) is linked at Asn326. Position 337 (Tyr337) interacts with chloride. Residues His398 and Asn420 contribute to the active site.

Belongs to the peptidase C1 family. Requires chloride as cofactor.

It localises to the lysosome. Functionally, thiol protease. Has a role as a digestive enzyme. This is Cathepsin C from Schistosoma mansoni (Blood fluke).